Consider the following 244-residue polypeptide: Diablo homolog, mitochondrial (244 aa).

Residues 1-38 (MASLPRRLIWSFSYILRESFPIVSRRNCVSLLRASWRK) constitute a mitochondrion transit peptide. The IAP-binding motif lies at 50 to 54 (AIPVG). The segment covering 207–218 (DEIKRTITEDKG) has biased composition (basic and acidic residues). The segment at 207-244 (DEIKRTITEDKGNPPSGGSPRSSLSEEEEIPEAYLRED) is disordered. Residues 220 to 229 (PPSGGSPRSS) are compositionally biased toward low complexity.

It belongs to the Smac/DIABLO protein family. As to quaternary structure, homodimer.

Its subcellular location is the mitochondrion. Functionally, promotes apoptosis. Acts by opposing the inhibitory activity of inhibitor of apoptosis proteins (IAP). This Xenopus tropicalis (Western clawed frog) protein is Diablo homolog, mitochondrial.